The primary structure comprises 168 residues: Phosphopantetheine adenylyltransferase (168 aa).

Threonine 14 serves as a coordination point for substrate. ATP contacts are provided by residues 14-15 and histidine 22; that span reads TF. 3 residues coordinate substrate: lysine 46, leucine 78, and arginine 92. Residues 93-95, glutamate 103, and 128-134 each bind ATP; these read GLR and YSFISSS.

It belongs to the bacterial CoaD family. Homohexamer. Mg(2+) is required as a cofactor.

Its subcellular location is the cytoplasm. The enzyme catalyses (R)-4'-phosphopantetheine + ATP + H(+) = 3'-dephospho-CoA + diphosphate. Its pathway is cofactor biosynthesis; coenzyme A biosynthesis; CoA from (R)-pantothenate: step 4/5. Functionally, reversibly transfers an adenylyl group from ATP to 4'-phosphopantetheine, yielding dephospho-CoA (dPCoA) and pyrophosphate. This Xanthomonas axonopodis pv. citri (strain 306) protein is Phosphopantetheine adenylyltransferase.